Consider the following 1399-residue polypeptide: DNA-directed RNA polymerase subunit beta' (1399 aa).

4 residues coordinate Zn(2+): Cys-70, Cys-72, Cys-85, and Cys-88. Mg(2+) contacts are provided by Asp-460, Asp-462, and Asp-464. The Zn(2+) site is built by Cys-814, Cys-888, Cys-895, and Cys-898.

The protein belongs to the RNA polymerase beta' chain family. As to quaternary structure, the RNAP catalytic core consists of 2 alpha, 1 beta, 1 beta' and 1 omega subunit. When a sigma factor is associated with the core the holoenzyme is formed, which can initiate transcription. Mg(2+) serves as cofactor. Zn(2+) is required as a cofactor.

The enzyme catalyses RNA(n) + a ribonucleoside 5'-triphosphate = RNA(n+1) + diphosphate. Functionally, DNA-dependent RNA polymerase catalyzes the transcription of DNA into RNA using the four ribonucleoside triphosphates as substrates. This chain is DNA-directed RNA polymerase subunit beta', found in Pseudomonas fluorescens (strain SBW25).